Reading from the N-terminus, the 190-residue chain is Nucleoside triphosphate pyrophosphatase (190 aa).

Asp-69 functions as the Proton acceptor in the catalytic mechanism.

This sequence belongs to the Maf family. It depends on a divalent metal cation as a cofactor.

It localises to the cytoplasm. The enzyme catalyses a ribonucleoside 5'-triphosphate + H2O = a ribonucleoside 5'-phosphate + diphosphate + H(+). The catalysed reaction is a 2'-deoxyribonucleoside 5'-triphosphate + H2O = a 2'-deoxyribonucleoside 5'-phosphate + diphosphate + H(+). Its function is as follows. Nucleoside triphosphate pyrophosphatase. May have a dual role in cell division arrest and in preventing the incorporation of modified nucleotides into cellular nucleic acids. In Helicobacter pylori (strain J99 / ATCC 700824) (Campylobacter pylori J99), this protein is Nucleoside triphosphate pyrophosphatase.